A 775-amino-acid chain; its full sequence is MAQKPDGGAGLRGFQAEASVEDSALLVQTLMEAIQISEAPPTSQATAAASGPNASPQSSQPPTANEKADTEVSAAAARPKTGFKAQNATTKGPNDYSQARNAKEMPKNQSKAAFKSQNGTPKGPHAASDFSQAAPTGKSAKKSEMAFKGQNSTKAGPGTTYNFPQSPSANEMTNNQPKTAKAWNDTTKVPGADAQTQNVNQAKMADVGTSAGISEADGAAAQTSADGSQTQNVESRTIIRGKRTRKVNNLNVEENNSGDQRRASLASGNWRSAPVPVTTQQNPPGAPPNVVWQTPLAWQNPSGWQNQTARQTPPAARQSPPARQTPSAWQNPVAWQNPVIWPNPVIWQNPVIWPNPIVWPGPIVWPNPMAWQSTPGWQSPPSWQAPPSWQSPQDWQGPPDWQVPPDWSMPPDWSFPSDWPFPPDWIPADWPIPPDWQNLRPSPNLRSSSNSRASQNQGPPQPRDVALLQERANKLVKYLMLKDYTKVPIKRSEMLRDIIREYTDVYPEIIERACFVLEKKFGIQLKEIDKEEHLYILISTPESLAGILGTTKDTPKLGLLLVILGIIFMNGNRATEAVLWEALRKMGLRPGVRHPLLGDLRKLLTYEFVKQKYLDYRRVPNSNPPEYEFLWGLRSYHETSKMKVLRFIAEVQKRDPRDWTAQFMEAADEALDALDAAAAEAEARAEARNRMGIGDEAVSGPWSWDDIEFELLTWDEEGDFGDPWSRIPFTFWARYHQNARSRFPQAFTGPIIGPSGTATANFAANFGAIGFFWVE.

Residues 37 to 330 (SEAPPTSQAT…PARQTPSAWQ (294 aa)) are disordered. Residues 39-50 (APPTSQATAAAS) show a composition bias toward low complexity. Composition is skewed to polar residues over residues 52–63 (PNASPQSSQPPT), 84–100 (KAQN…SQAR), 107–120 (KNQS…QNGT), 149–178 (GQNS…NQPK), 221–235 (AQTS…NVES), 247–258 (VNNLNVEENNSG), and 296–308 (LAWQ…QNQT). A run of 19 repeats spans residues 292–297 (WQTPLA), 298–303 (WQNPSG), 304–309 (WQNQTA), 329–334 (WQNPVA), 335–340 (WQNPVI), 341–346 (WPNPVI), 347–352 (WQNPVI), 353–358 (WPNPIV), 359–364 (WPGPIV), 365–370 (WPNPMA), 371–376 (WQSTPG), 377–382 (WQSPPS), 383–388 (WQAPPS), 389–394 (WQSPQD), 395–400 (WQGPPD), 401–406 (WQVPPD), 407–412 (WSMPPD), 413–418 (WSFPSD), and 419–424 (WPFPPD). Residues 292–441 (WQTPLAWQNP…IPPDWQNLRP (150 aa)) form a 22 X 6 AA tandem repeats of W-[PQ]-X-P-X-X region. Over residues 309–326 (ARQTPPAARQSPPARQTP) the composition is skewed to low complexity. The tract at residues 374-409 (TPGWQSPPSWQAPPSWQSPQDWQGPPDWQVPPDWSM) is disordered. Over residues 375-406 (PGWQSPPSWQAPPSWQSPQDWQGPPDWQVPPD) the composition is skewed to low complexity. A 20; approximate repeat occupies 425–429 (WIPAD). A run of 2 repeats spans residues 430–435 (WPIPPD) and 436–441 (WQNLRP). Positions 437 to 452 (QNLRPSPNLRSSSNSR) are enriched in low complexity. A disordered region spans residues 437–463 (QNLRPSPNLRSSSNSRASQNQGPPQPR). Positions 468–666 (LQERANKLVK…RDWTAQFMEA (199 aa)) constitute an MAGE domain.

As to quaternary structure, interacts with DLX5, DLX7 and MSX2 and forms homomultimers. Interacts with UNC5A. Interacts with TRIM28 and PJA1. Interacts with NGFR/p75NTR and RORA. In terms of tissue distribution, ubiquitously expressed in many adult tissues, except for the spleen. Expressed in osteoblastic and chondrogenic cell lines and also during embryonic development.

The protein resides in the nucleus. It localises to the cytoplasm. It is found in the cell membrane. Functionally, involved in the apoptotic response after nerve growth factor (NGF) binding in neuronal cells. Inhibits cell cycle progression, and facilitates NGFR-mediated apoptosis. May act as a regulator of the function of DLX family members. May enhance ubiquitin ligase activity of RING-type zinc finger-containing E3 ubiquitin-protein ligases. Proposed to act through recruitment and/or stabilization of the Ubl-conjugating enzyme (E2) at the E3:substrate complex. Plays a role in the circadian rhythm regulation. May act as RORA coregulator, modulating the expression of core clock genes such as BMAL1 and NFIL3, induced, or NR1D1, repressed. The protein is Melanoma-associated antigen D1 (Maged1) of Mus musculus (Mouse).